The chain runs to 469 residues: Transcription factor SOX-10 (469 aa).

5 disordered regions span residues 1–70, 163–203, 215–278, 357–378, and 436–469; these read MAEE…DDDK, LRMQ…QGGA, LDHR…DFGN, AQVK…QPST, and RPLY…LSRP. Positions 23-32 are enriched in low complexity; it reads LSPGSAPSLG. Ser-24 is subject to Phosphoserine. A compositionally biased stretch (gly residues) spans 33 to 44; that stretch reads PDGGGGGGGGSG. The dimerization (DIM) stretch occupies residues 65–105; sequence EADDDKFPVCIREAVSQVLSGYDWTLVPMPVRVNGASKSKP. Positions 107–175 form a DNA-binding region, HMG box; that stretch reads VKRPMNAFMV…QHKKDHPDYK (69 aa). 2 stretches are compositionally biased toward basic and acidic residues: residues 163 to 176 and 257 to 274; these read LRMQ…DYKY and ADPK…KPHI. The transactivation domain (TAM) stretch occupies residues 231–313; it reads PEHPSGQSHG…LPPNGHPGHV (83 aa). Residues 356–469 are transactivation domain (TAC); the sequence is KAQVKTETAG…QPVYTTLSRP (114 aa). Residues 443–469 show a composition bias toward polar residues; that stretch reads SDPSPSGPQSHSPTHWEQPVYTTLSRP.

Monomer. Interacts with ARMCX3 at the mitochondrial outer membrane surface. Interacts with PAX3.

Its subcellular location is the cytoplasm. The protein resides in the nucleus. It is found in the mitochondrion outer membrane. Functionally, transcription factor that plays a central role in developing and mature glia. Specifically activates expression of myelin genes, during oligodendrocyte (OL) maturation, such as DUSP15 and MYRF, thereby playing a central role in oligodendrocyte maturation and CNS myelination. Once induced, MYRF cooperates with SOX10 to implement the myelination program. Transcriptional activator of MITF, acting synergistically with PAX3. Transcriptional activator of MBP, via binding to the gene promoter. This is Transcription factor SOX-10 (SOX10) from Sus scrofa (Pig).